We begin with the raw amino-acid sequence, 139 residues long: Acidic phospholipase A2 S1E6-c (139 aa).

The N-terminal stretch at 1–16 (MRTLWILAVLLVGVEG) is a signal peptide. Intrachain disulfides connect cysteine 42-cysteine 132, cysteine 44-cysteine 60, cysteine 59-cysteine 111, cysteine 65-cysteine 139, cysteine 66-cysteine 104, cysteine 73-cysteine 97, and cysteine 91-cysteine 102. Ca(2+) is bound by residues tyrosine 43, glycine 45, and glycine 47. Histidine 63 is a catalytic residue. Residue aspartate 64 coordinates Ca(2+). The active site involves aspartate 105.

The protein belongs to the phospholipase A2 family. Group II subfamily. D49 sub-subfamily. In terms of assembly, homodimer. Requires Ca(2+) as cofactor. Expressed by the venom gland.

The protein localises to the secreted. The catalysed reaction is a 1,2-diacyl-sn-glycero-3-phosphocholine + H2O = a 1-acyl-sn-glycero-3-phosphocholine + a fatty acid + H(+). Snake venom phospholipase A2 (PLA2) that inhibits ADP-induced platelet aggregation. PLA2 catalyzes the calcium-dependent hydrolysis of the 2-acyl groups in 3-sn-phosphoglycerides. The polypeptide is Acidic phospholipase A2 S1E6-c (Calloselasma rhodostoma (Malayan pit viper)).